We begin with the raw amino-acid sequence, 157 residues long: 2-C-methyl-D-erythritol 2,4-cyclodiphosphate synthase (157 aa).

A divalent metal cation is bound by residues D8 and H10. Residues 8–10 and 34–35 contribute to the 4-CDP-2-C-methyl-D-erythritol 2-phosphate site; these read DVH and HS. Residue H42 participates in a divalent metal cation binding. Residues 56–58, 132–135, and R142 contribute to the 4-CDP-2-C-methyl-D-erythritol 2-phosphate site; these read DIG and TTNE.

It belongs to the IspF family. In terms of assembly, homotrimer. A divalent metal cation serves as cofactor.

The enzyme catalyses 4-CDP-2-C-methyl-D-erythritol 2-phosphate = 2-C-methyl-D-erythritol 2,4-cyclic diphosphate + CMP. It participates in isoprenoid biosynthesis; isopentenyl diphosphate biosynthesis via DXP pathway; isopentenyl diphosphate from 1-deoxy-D-xylulose 5-phosphate: step 4/6. Functionally, involved in the biosynthesis of isopentenyl diphosphate (IPP) and dimethylallyl diphosphate (DMAPP), two major building blocks of isoprenoid compounds. Catalyzes the conversion of 4-diphosphocytidyl-2-C-methyl-D-erythritol 2-phosphate (CDP-ME2P) to 2-C-methyl-D-erythritol 2,4-cyclodiphosphate (ME-CPP) with a corresponding release of cytidine 5-monophosphate (CMP). This Chlorobium phaeovibrioides (strain DSM 265 / 1930) (Prosthecochloris vibrioformis (strain DSM 265)) protein is 2-C-methyl-D-erythritol 2,4-cyclodiphosphate synthase.